The following is a 260-amino-acid chain: MHQLTIAGKAYRSRLLVGTGKYKDFAETRAAIDASGAEIVTVAIRRTNIGQDASQPNLLDAIPPSKFTILPNTAGCYTADDAVRTLRLARELLDGHPLCKLEVLGDPTNLFPNMPETLKAAETLVKEGFQVMVYCADDPIQCKMLEEIGCVAVMPLASLIGSGMGIVNPWNLRLIIDNAKVPIIVDAGVGTASDAAIAMELGCDGVLMNTAIAHAKDPILMASAMKKGVEAGREAFLAGRMARKYYSADPSSPTSGLIGS.

Catalysis depends on lysine 100, which acts as the Schiff-base intermediate with DXP. 1-deoxy-D-xylulose 5-phosphate-binding positions include glycine 161, 187–188 (AG), and 209–210 (NT).

The protein belongs to the ThiG family. In terms of assembly, homotetramer. Forms heterodimers with either ThiH or ThiS.

The protein localises to the cytoplasm. It catalyses the reaction [ThiS sulfur-carrier protein]-C-terminal-Gly-aminoethanethioate + 2-iminoacetate + 1-deoxy-D-xylulose 5-phosphate = [ThiS sulfur-carrier protein]-C-terminal Gly-Gly + 2-[(2R,5Z)-2-carboxy-4-methylthiazol-5(2H)-ylidene]ethyl phosphate + 2 H2O + H(+). It functions in the pathway cofactor biosynthesis; thiamine diphosphate biosynthesis. In terms of biological role, catalyzes the rearrangement of 1-deoxy-D-xylulose 5-phosphate (DXP) to produce the thiazole phosphate moiety of thiamine. Sulfur is provided by the thiocarboxylate moiety of the carrier protein ThiS. In vitro, sulfur can be provided by H(2)S. The polypeptide is Thiazole synthase (Dechloromonas aromatica (strain RCB)).